The chain runs to 89 residues: Putative regulatory protein Nther_1328 (89 aa).

It belongs to the RemA family.

The chain is Putative regulatory protein Nther_1328 from Natranaerobius thermophilus (strain ATCC BAA-1301 / DSM 18059 / JW/NM-WN-LF).